We begin with the raw amino-acid sequence, 487 residues long: NADH-quinone oxidoreductase subunit N (487 aa).

A run of 13 helical transmembrane segments spans residues 9-29 (PVLP…LGVF), 38-58 (VSVL…SLGG), 73-93 (FAGF…AMSL), 108-128 (VLVL…DFIA), 161-181 (FVLG…LYGF), 208-228 (IIAG…AVPF), 240-260 (PTPV…CLLV), 277-297 (VVTF…VVQT), 306-326 (SSIG…TLGI), 328-348 (GVLI…AVIL), 374-394 (AFVM…AGFW), 408-430 (LYTL…LRIV), and 452-472 (LVMA…APLV).

It belongs to the complex I subunit 2 family. NDH-1 is composed of 14 different subunits. Subunits NuoA, H, J, K, L, M, N constitute the membrane sector of the complex.

The protein resides in the cell inner membrane. It catalyses the reaction a quinone + NADH + 5 H(+)(in) = a quinol + NAD(+) + 4 H(+)(out). In terms of biological role, NDH-1 shuttles electrons from NADH, via FMN and iron-sulfur (Fe-S) centers, to quinones in the respiratory chain. The immediate electron acceptor for the enzyme in this species is believed to be ubiquinone. Couples the redox reaction to proton translocation (for every two electrons transferred, four hydrogen ions are translocated across the cytoplasmic membrane), and thus conserves the redox energy in a proton gradient. This is NADH-quinone oxidoreductase subunit N from Paramagnetospirillum magneticum (strain ATCC 700264 / AMB-1) (Magnetospirillum magneticum).